Here is a 335-residue protein sequence, read N- to C-terminus: Methionine aminopeptidase 1D, mitochondrial (335 aa).

The transit peptide at 1-19 directs the protein to the mitochondrion; the sequence is MAAPIGVPLLVRGGCQRIL. Substrate is bound at residue His-161. A divalent metal cation contacts are provided by Asp-178, Asp-189, and His-252. Substrate is bound at residue His-259. The a divalent metal cation site is built by Glu-284 and Glu-315.

Belongs to the peptidase M24A family. Methionine aminopeptidase type 1 subfamily. It depends on Co(2+) as a cofactor. Zn(2+) is required as a cofactor. Requires Mn(2+) as cofactor. Fe(2+) serves as cofactor.

The protein resides in the mitochondrion. It carries out the reaction Release of N-terminal amino acids, preferentially methionine, from peptides and arylamides.. Removes the N-terminal methionine from nascent proteins. The N-terminal methionine is often cleaved when the second residue in the primary sequence is small and uncharged (Met-Ala-, Cys, Gly, Pro, Ser, Thr, or Val). Requires deformylation of the N(alpha)-formylated initiator methionine before it can be hydrolyzed. This Mus musculus (Mouse) protein is Methionine aminopeptidase 1D, mitochondrial (Metap1d).